We begin with the raw amino-acid sequence, 168 residues long: MLVYQDLLTGDELLSDSFPYKEIQNGMLWEVQGKWVVQGAVDVNIGANPSAEGGGEDEGVDDQAVKVVDIVDTFRLQEQPAFDKKQFVTYIKRYIKNLTPKLEGEAQEAFKKNIESATKFLLSKLKDFQFFVGEGMHDDSALVFAYYKDGSADPTFLYLAPGLKEIKC.

Residues 1–168 enclose the TCTP domain; it reads MLVYQDLLTG…LAPGLKEIKC (168 aa).

It belongs to the TCTP family.

The protein localises to the cytoplasm. Involved in calcium binding and microtubule stabilization. This is Translationally-controlled tumor protein homolog (TCTP) from Solanum tuberosum (Potato).